The chain runs to 308 residues: Glutaminase (308 aa).

Ser66, Asn117, Glu162, Asn169, Tyr193, Tyr244, and Val262 together coordinate substrate.

Belongs to the glutaminase family. Homotetramer.

It catalyses the reaction L-glutamine + H2O = L-glutamate + NH4(+). In Natranaerobius thermophilus (strain ATCC BAA-1301 / DSM 18059 / JW/NM-WN-LF), this protein is Glutaminase.